The primary structure comprises 458 residues: MATESPATRRVQVAEHPRLLKLKEMFNSKFGSIPKFYVRAPGRVNIIGEHIDYCGYSVLPMAVEQDVLIAVEPVKTYTLQLANTNPLYPDLSTSANNIQIDKTKPLWHNYFLCGLKGIQEHFGVSNLTGMNCLVDGNIPPSSGLSSSSALVCCAGLVTLTVLGRNLSKVELAEICAKSERYIGTEGGGMDQSISFLAEEGTAKLIEFSPLRATDVKLPSGAVFVIANSCVEMNKAATSHFNIRVMECRLAAKLLAKYKSLQWDKVLRLEEVQAKLGISLEEMLLVTEDALHPEPYNPEEICRCLGISLEELRTQILSPNTQDVLIFKLYQRAKHVYSEAARVLQFKKICEEAPENMVQLLGELMNQSHMSCRDMYECSCPELDQLVDICRKFGAQGSRLTGAGWGGCTVSIVPADKLPSFLANVHKAYYHRSDGSLAPEKQSLFATKPGGGALVLLEA.

4 residues coordinate alpha-D-galactose: R43, E49, H50, and D52. ATP is bound by residues G143, S145, and S146. Residue D190 coordinates alpha-D-galactose. The active-site Proton acceptor is the D190. ATP is bound by residues N233 and K234.

The protein belongs to the GHMP kinase family. GalK subfamily. As to quaternary structure, monomer.

The catalysed reaction is N-acetyl-alpha-D-galactosamine + ATP = N-acetyl-alpha-D-galactosamine 1-phosphate + ADP + H(+). In terms of biological role, acts on GalNAc. Also acts as a galactokinase when galactose is present at high concentrations. The sequence is that of N-acetylgalactosamine kinase (GALK2) from Pongo abelii (Sumatran orangutan).